Reading from the N-terminus, the 181-residue chain is MAISLGRVVVPSCTISGDRLFIPNFSAICSVSCGRINVGTGVISARRRRDIGGVLISSCLSTDSSSSPPSSSSGPKTKLYVSGLSFRTTEDTLRDTFEQFGNLIHMNMVMDKVANRPKGFAFLRYETEEEAMKAIQGMHGKFLDGRVIFVEEAKTRSDMSRAKPRRDFPKPQSKPRTFRTW.

The transit peptide at 1 to 44 (MAISLGRVVVPSCTISGDRLFIPNFSAICSVSCGRINVGTGVIS) directs the protein to the chloroplast. Residues 77–155 (TKLYVSGLSF…RVIFVEEAKT (79 aa)) form the RRM domain. Over residues 155–169 (TRSDMSRAKPRRDFP) the composition is skewed to basic and acidic residues. The disordered stretch occupies residues 155-181 (TRSDMSRAKPRRDFPKPQSKPRTFRTW).

As to quaternary structure, interacts with MORF8/RIP1, MORF2/RIP2, MORF9/RIP9 and VAR3/OZ1.

It localises to the plastid. The protein resides in the chloroplast. Functionally, involved in C-to-U editing of chloroplastic RNA. Required for the photosynthetic subunit psbF transcript editing in chloroplast. This is Organelle RRM domain-containing protein 6, chloroplastic from Arabidopsis thaliana (Mouse-ear cress).